A 364-amino-acid chain; its full sequence is MELSPNNSTDQSLLDAQLELWHTTFAFMKSMALKSAIHLRIADAIHLHGGAASLSQILSKVHLHPSRVSSLRRLMRVLTTTNVFGTQPLGGGSDDDSEPVYTLTPVSRLLIGSQSSQLAQTPLAAMVLDPTIVSPFSELGAWFQHELPDPCIFKHTHGRGIWELTKDDATFDALVNDGLASDSQLIVDVAIKQSAEVFQGISSLVDVGGGIGAAAQAISKAFPHVKCSVLDLAHVVAKAPTHTDVQFIAGDMFESIPPADAVLLKSVLHDWDHDDCVKILKNCKKAIPPREAGGKVIIINMVVGAGPSDMKHKEMQAIFDVYIMFINGMERDEQEWSKIFSEAGYSDYRIIPVLGVRSIIEVYP.

The S-adenosyl-L-methionine site is built by Gly-208, Asp-231, Asp-251, Met-252, and Lys-265. The active-site Proton acceptor is the His-269.

It belongs to the class I-like SAM-binding methyltransferase superfamily. Cation-independent O-methyltransferase family. COMT subfamily. As to quaternary structure, homodimer. As to expression, accumulates preferentially in the roots and is located predominantly in the region of the endodermis, low levels are seen in the leaves, stems and other shoot organs.

May be involved in the O-methylation of suberin phenylpropanoid precursors. The protein is O-methyltransferase ZRP4 (ZRP4) of Zea mays (Maize).